A 346-amino-acid chain; its full sequence is Uroporphyrinogen decarboxylase (346 aa).

Residues 23–27, Asp-72, Tyr-149, Thr-204, and His-318 contribute to the substrate site; that span reads RQAGR.

The protein belongs to the uroporphyrinogen decarboxylase family. In terms of assembly, homodimer.

It is found in the cytoplasm. It carries out the reaction uroporphyrinogen III + 4 H(+) = coproporphyrinogen III + 4 CO2. The protein operates within porphyrin-containing compound metabolism; protoporphyrin-IX biosynthesis; coproporphyrinogen-III from 5-aminolevulinate: step 4/4. Catalyzes the decarboxylation of four acetate groups of uroporphyrinogen-III to yield coproporphyrinogen-III. This is Uroporphyrinogen decarboxylase from Synechococcus sp. (strain JA-2-3B'a(2-13)) (Cyanobacteria bacterium Yellowstone B-Prime).